The following is a 22-amino-acid chain: Putative lactoylglutathione lyase (22 aa).

Residues 1–22 form a disordered region; it reads ITACLDPDGWKEPGPLPGISTK. The Proton donor/acceptor role is filled by glutamate 12.

This sequence belongs to the glyoxalase I family. Zn(2+) serves as cofactor.

The enzyme catalyses (R)-S-lactoylglutathione = methylglyoxal + glutathione. It functions in the pathway secondary metabolite metabolism; methylglyoxal degradation; (R)-lactate from methylglyoxal: step 1/2. Its function is as follows. Catalyzes the conversion of hemimercaptal, formed from methylglyoxal and glutathione, to S-lactoylglutathione. This chain is Putative lactoylglutathione lyase, found in Pinus strobus (Eastern white pine).